Consider the following 194-residue polypeptide: Recombination protein RecR (194 aa).

The segment at 55-70 (CRECGNLAEGELCPIC) adopts a C4-type zinc-finger fold. One can recognise a Toprim domain in the interval 78–171 (SLLAVVESVA…RVTRPAYGLP (94 aa)).

The protein belongs to the RecR family.

Functionally, may play a role in DNA repair. It seems to be involved in an RecBC-independent recombinational process of DNA repair. It may act with RecF and RecO. This is Recombination protein RecR from Thermus thermophilus (strain ATCC BAA-163 / DSM 7039 / HB27).